Here is an 849-residue protein sequence, read N- to C-terminus: Putative endoplasmic reticulum mannosidase MNL2 (849 aa).

At 1-12 (MSIARLVYSLFR) the chain is on the cytoplasmic side. The chain crosses the membrane as a helical; Signal-anchor for type II membrane protein span at residues 13–32 (RVRSVLLLFITISLLFYYTF). The Lumenal portion of the chain corresponds to 33-849 (QNEIDILNSY…TQGGHIIKKK (817 aa)). N-linked (GlcNAc...) asparagine glycosylation is present at N45. Positions 56–79 (HNTEGSSKLDPPDLSSTGSDRIAT) are disordered. An intrachain disulfide couples C559 to C598.

It belongs to the glycosyl hydrolase 47 family. The cofactor is Ca(2+).

It is found in the endoplasmic reticulum membrane. It functions in the pathway protein modification; protein glycosylation. Its function is as follows. Putative mannosidase involved in glycoprotein quality control since it is involved in the targeting of misfolded glycoproteins for ER-associated protein degradation (ERAD). The chain is Putative endoplasmic reticulum mannosidase MNL2 (MNL2) from Saccharomyces cerevisiae (strain ATCC 204508 / S288c) (Baker's yeast).